Consider the following 314-residue polypeptide: 4-hydroxy-3-methylbut-2-enyl diphosphate reductase (314 aa).

Cys12 lines the [4Fe-4S] cluster pocket. (2E)-4-hydroxy-3-methylbut-2-enyl diphosphate is bound by residues His43 and His81. Dimethylallyl diphosphate contacts are provided by His43 and His81. The isopentenyl diphosphate site is built by His43 and His81. Cys103 lines the [4Fe-4S] cluster pocket. A (2E)-4-hydroxy-3-methylbut-2-enyl diphosphate-binding site is contributed by His131. His131 contributes to the dimethylallyl diphosphate binding site. His131 lines the isopentenyl diphosphate pocket. Catalysis depends on Glu133, which acts as the Proton donor. (2E)-4-hydroxy-3-methylbut-2-enyl diphosphate is bound at residue Thr170. Position 198 (Cys198) interacts with [4Fe-4S] cluster. Residues Ser226, Asn228, and Ser271 each coordinate (2E)-4-hydroxy-3-methylbut-2-enyl diphosphate. Residues Ser226, Asn228, and Ser271 each contribute to the dimethylallyl diphosphate site. Residues Ser226, Asn228, and Ser271 each coordinate isopentenyl diphosphate.

Belongs to the IspH family. [4Fe-4S] cluster serves as cofactor.

It carries out the reaction isopentenyl diphosphate + 2 oxidized [2Fe-2S]-[ferredoxin] + H2O = (2E)-4-hydroxy-3-methylbut-2-enyl diphosphate + 2 reduced [2Fe-2S]-[ferredoxin] + 2 H(+). It catalyses the reaction dimethylallyl diphosphate + 2 oxidized [2Fe-2S]-[ferredoxin] + H2O = (2E)-4-hydroxy-3-methylbut-2-enyl diphosphate + 2 reduced [2Fe-2S]-[ferredoxin] + 2 H(+). It functions in the pathway isoprenoid biosynthesis; dimethylallyl diphosphate biosynthesis; dimethylallyl diphosphate from (2E)-4-hydroxy-3-methylbutenyl diphosphate: step 1/1. The protein operates within isoprenoid biosynthesis; isopentenyl diphosphate biosynthesis via DXP pathway; isopentenyl diphosphate from 1-deoxy-D-xylulose 5-phosphate: step 6/6. Its function is as follows. Catalyzes the conversion of 1-hydroxy-2-methyl-2-(E)-butenyl 4-diphosphate (HMBPP) into a mixture of isopentenyl diphosphate (IPP) and dimethylallyl diphosphate (DMAPP). Acts in the terminal step of the DOXP/MEP pathway for isoprenoid precursor biosynthesis. In Bacillus licheniformis (strain ATCC 14580 / DSM 13 / JCM 2505 / CCUG 7422 / NBRC 12200 / NCIMB 9375 / NCTC 10341 / NRRL NRS-1264 / Gibson 46), this protein is 4-hydroxy-3-methylbut-2-enyl diphosphate reductase.